The sequence spans 198 residues: Nascent polypeptide-associated complex subunit alpha (198 aa).

An NAC-A/B domain is found at 48–113; it reads ITRVVLKRTR…QAAAETGSVS (66 aa). In terms of domain architecture, UBA spans 159–198; the sequence is LEDSDIKLVMEQANVSRNKAINGLKKNDSDVVNTIMDLCK.

Belongs to the NAC-alpha family. As to quaternary structure, part of the nascent polypeptide-associated complex (NAC), consisting of EGD2 and EGD1. NAC associates with ribosomes via EGD1.

It localises to the cytoplasm. The protein resides in the nucleus. Component of the nascent polypeptide-associated complex (NAC), a dynamic component of the ribosomal exit tunnel, protecting the emerging polypeptides from interaction with other cytoplasmic proteins to ensure appropriate nascent protein targeting. The NAC complex also promotes mitochondrial protein import by enhancing productive ribosome interactions with the outer mitochondrial membrane and blocks the inappropriate interaction of ribosomes translating non-secretory nascent polypeptides with translocation sites in the membrane of the endoplasmic reticulum. EGD2 may also be involved in transcription regulation. The chain is Nascent polypeptide-associated complex subunit alpha (EGD2) from Yarrowia lipolytica (strain CLIB 122 / E 150) (Yeast).